The primary structure comprises 406 residues: Protein PHYTOCHROME KINASE SUBSTRATE 4 (406 aa).

Positions 106 to 119 (SWNSQTGLLSNKNR) are enriched in polar residues. Positions 106–133 (SWNSQTGLLSNKNRQGSDRDGRRSSKKG) are disordered.

This sequence belongs to the PKS family. In terms of assembly, interacts in vitro with PHYA and PHYB. In terms of tissue distribution, expressed in the hypocotyl elongation zone. Not found in the root elongation zone.

In terms of biological role, modulates phytochrome-mediated control of hypocotyl growth orientation. Involved in PHYA and PHYB signaling. Acts as an inhibitor of asymmetric growth. Not involved in the control of leaf flattening. The sequence is that of Protein PHYTOCHROME KINASE SUBSTRATE 4 (PKS4) from Arabidopsis thaliana (Mouse-ear cress).